A 433-amino-acid chain; its full sequence is Glutamate-1-semialdehyde 2,1-aminomutase (433 aa).

Position 265 is an N6-(pyridoxal phosphate)lysine (Lys-265).

The protein belongs to the class-III pyridoxal-phosphate-dependent aminotransferase family. HemL subfamily. As to quaternary structure, homodimer. Pyridoxal 5'-phosphate serves as cofactor.

Its subcellular location is the cytoplasm. It catalyses the reaction (S)-4-amino-5-oxopentanoate = 5-aminolevulinate. It functions in the pathway porphyrin-containing compound metabolism; protoporphyrin-IX biosynthesis; 5-aminolevulinate from L-glutamyl-tRNA(Glu): step 2/2. This chain is Glutamate-1-semialdehyde 2,1-aminomutase, found in Shewanella denitrificans (strain OS217 / ATCC BAA-1090 / DSM 15013).